The primary structure comprises 53 residues: Metallocarboxypeptidase inhibitor b (53 aa).

3 disulfide bridges follow: Cys-9-Cys-23, Cys-15-Cys-51, and Cys-27-Cys-38. Ala-53 is a binding site for Zn(2+).

In terms of biological role, metallocarboxypeptidase inhibitor. Has an inhibitory effect on bovine CPA1 and porcine CPB1. Does not inhibit D.melanogaster svr (carboxypeptidase D). Shows no activity against serine proteases subtilisin or bovine trypsin, cysteine protease papain, and aspartyl protease porcine pepsin. The chain is Metallocarboxypeptidase inhibitor b from Nerita versicolor (Four-tooth nerite).